A 149-amino-acid polypeptide reads, in one-letter code: Early lymphoid activation gene protein (149 aa).

In terms of tissue distribution, expressed in heart, kidney, lung, and skeletal muscle, with lower levels in pancreas and liver.

Functionally, may function as an early signal that helps mediate the activation of T-cells. This Homo sapiens (Human) protein is Early lymphoid activation gene protein (DIAPH2-AS1).